The chain runs to 232 residues: Small ribosomal subunit protein uS2 (232 aa).

This sequence belongs to the universal ribosomal protein uS2 family.

The polypeptide is Small ribosomal subunit protein uS2 (Heliobacterium modesticaldum (strain ATCC 51547 / Ice1)).